The chain runs to 508 residues: Histidine ammonia-lyase (508 aa).

Positions 143 to 145 form a cross-link, 5-imidazolinone (Ala-Gly); sequence ASG. At S144 the chain carries 2,3-didehydroalanine (Ser).

The protein belongs to the PAL/histidase family. Contains an active site 4-methylidene-imidazol-5-one (MIO), which is formed autocatalytically by cyclization and dehydration of residues Ala-Ser-Gly.

It is found in the cytoplasm. The enzyme catalyses L-histidine = trans-urocanate + NH4(+). It functions in the pathway amino-acid degradation; L-histidine degradation into L-glutamate; N-formimidoyl-L-glutamate from L-histidine: step 1/3. The chain is Histidine ammonia-lyase from Anaeromyxobacter sp. (strain K).